Reading from the N-terminus, the 461-residue chain is Putative transcription initiation factor IIB-like protein (461 aa).

The disordered stretch occupies residues 113 to 142; it reads SESLENIQSENSENNDNFTDNNTKKSPTKS. Low complexity predominate over residues 121-137; the sequence is SENSENNDNFTDNNTKK. The TFIIB-type zinc-finger motif lies at 141–173; it reads KSRICSGCGSKGTLLEDQSSSVLVCSECGMIND. Zn(2+) contacts are provided by C145, C165, and C168. 2 repeat units span residues 246–327 and 360–430.

Belongs to the TFIIB family.

This Acanthamoeba polyphaga mimivirus (APMV) protein is Putative transcription initiation factor IIB-like protein.